Here is a 120-residue protein sequence, read N- to C-terminus: MVFEIPEPYQWDETFEVFYEKLDEEHKGLFKGIKDLSDSPACSETLEKLVKLIEDHFTDEEEMMKSKSYEDLDSHKKIHSDFVETLKGVKAPVSEENIKMAKEWLVNHIKGTDFKYKGKL.

7 residues coordinate Fe cation: His-26, His-56, Glu-60, His-75, His-79, His-108, and Asp-113.

Belongs to the hemerythrin family. In terms of assembly, monomer.

The protein resides in the cytoplasm. In terms of biological role, myohemerythrin is an oxygen-binding protein found in the retractor muscles of certain worms. The oxygen-binding site contains two iron atoms. The polypeptide is Myohemerythrin (Theromyzon tessulatum (Duck leech)).